Reading from the N-terminus, the 149-residue chain is Large ribosomal subunit protein uL15 (149 aa).

The disordered stretch occupies residues 21–54; the sequence is RGSASGLGCTSGKGNKGQNARSGGGVRPGFEGGQ. Gly residues-rich tracts occupy residues 23–35 and 42–52; these read SASG…GKGN and SGGGVRPGFEG.

The protein belongs to the universal ribosomal protein uL15 family. As to quaternary structure, part of the 50S ribosomal subunit.

Its function is as follows. Binds to the 23S rRNA. This chain is Large ribosomal subunit protein uL15, found in Lawsonia intracellularis (strain PHE/MN1-00).